We begin with the raw amino-acid sequence, 518 residues long: ATP synthase subunit alpha (518 aa).

Residue 169-176 (GDRKTGKT) participates in ATP binding.

The protein belongs to the ATPase alpha/beta chains family. In terms of assembly, F-type ATPases have 2 components, CF(1) - the catalytic core - and CF(0) - the membrane proton channel. CF(1) has five subunits: alpha(3), beta(3), gamma(1), delta(1), epsilon(1). CF(0) has three main subunits: a(1), b(2) and c(9-12). The alpha and beta chains form an alternating ring which encloses part of the gamma chain. CF(1) is attached to CF(0) by a central stalk formed by the gamma and epsilon chains, while a peripheral stalk is formed by the delta and b chains.

The protein resides in the cell membrane. It catalyses the reaction ATP + H2O + 4 H(+)(in) = ADP + phosphate + 5 H(+)(out). Produces ATP from ADP in the presence of a proton gradient across the membrane. The alpha chain is a regulatory subunit. The chain is ATP synthase subunit alpha from Enterococcus hirae (strain ATCC 9790 / DSM 20160 / JCM 8729 / LMG 6399 / NBRC 3181 / NCIMB 6459 / NCDO 1258 / NCTC 12367 / WDCM 00089 / R).